We begin with the raw amino-acid sequence, 305 residues long: Heat stress transcription factor B-4d (305 aa).

The tract at residues 201-230 is hydrophobic repeat HR-A/B; that stretch reads LRRRNSLLLSELAHMRKLYNDIIYFLQNHV. The Nuclear localization signal signature appears at 286-289; it reads KKRR. The tract at residues 286 to 305 is disordered; that stretch reads KKRRVQLVQEDEGDEQGSEG. Residues 294–305 show a composition bias toward acidic residues; the sequence is QEDEGDEQGSEG.

This sequence belongs to the HSF family. Class B subfamily. In terms of assembly, homotrimer. Post-translationally, exhibits temperature-dependent phosphorylation.

It is found in the nucleus. Transcriptional regulator that specifically binds DNA of heat shock promoter elements (HSE). The chain is Heat stress transcription factor B-4d (HSFB4D) from Oryza sativa subsp. japonica (Rice).